Reading from the N-terminus, the 210-residue chain is Histidine biosynthesis bifunctional protein HisIE (210 aa).

A phosphoribosyl-AMP cyclohydrolase region spans residues 1–121; that stretch reads MNPASPFATL…DAQEESQMVW (121 aa). Residues 122 to 210 form a phosphoribosyl-ATP pyrophosphohydrolase region; the sequence is LHQLEQLLAE…VINKLKERHK (89 aa).

The protein in the N-terminal section; belongs to the PRA-CH family. In the C-terminal section; belongs to the PRA-PH family.

It is found in the cytoplasm. The catalysed reaction is 1-(5-phospho-beta-D-ribosyl)-ATP + H2O = 1-(5-phospho-beta-D-ribosyl)-5'-AMP + diphosphate + H(+). The enzyme catalyses 1-(5-phospho-beta-D-ribosyl)-5'-AMP + H2O = 1-(5-phospho-beta-D-ribosyl)-5-[(5-phospho-beta-D-ribosylamino)methylideneamino]imidazole-4-carboxamide. It functions in the pathway amino-acid biosynthesis; L-histidine biosynthesis; L-histidine from 5-phospho-alpha-D-ribose 1-diphosphate: step 2/9. Its pathway is amino-acid biosynthesis; L-histidine biosynthesis; L-histidine from 5-phospho-alpha-D-ribose 1-diphosphate: step 3/9. This Vibrio cholerae serotype O1 (strain ATCC 39315 / El Tor Inaba N16961) protein is Histidine biosynthesis bifunctional protein HisIE (hisI).